A 361-amino-acid chain; its full sequence is Ribosomal RNA large subunit methyltransferase M (361 aa).

S-adenosyl-L-methionine-binding positions include serine 187, 220–223, aspartate 239, aspartate 259, and aspartate 276; that span reads CPGG. The active-site Proton acceptor is the lysine 305.

This sequence belongs to the class I-like SAM-binding methyltransferase superfamily. RNA methyltransferase RlmE family. RlmM subfamily. Monomer.

It is found in the cytoplasm. It catalyses the reaction cytidine(2498) in 23S rRNA + S-adenosyl-L-methionine = 2'-O-methylcytidine(2498) in 23S rRNA + S-adenosyl-L-homocysteine + H(+). Catalyzes the 2'-O-methylation at nucleotide C2498 in 23S rRNA. This chain is Ribosomal RNA large subunit methyltransferase M, found in Shewanella baltica (strain OS185).